A 270-amino-acid chain; its full sequence is MLIDWFTVIAQLINFLVLVWLLKHFLYRPILNTIDAREKRIADELADADSKIAEAEQQREAFQQKNAEFDQQRTAQMNKVGEEAKAERTRLLEEVRQESDALRSKLKLALKNEQLSLKDSLSQRAREEVFAIVRKALSDLASTSLEASMADVFVKRLDALADAEKTSLQATFQESTEVLIVHTAFDLPKKQITQITKALHGLLGDGVVIEFATDANLISGIEIDSHGQKIGWSIADYLTTLTKRVNDVMLSHNAVQDESPELEKSQEQAS.

The helical transmembrane segment at 2-22 (LIDWFTVIAQLINFLVLVWLL) threads the bilayer.

This sequence belongs to the ATPase B chain family. In terms of assembly, F-type ATPases have 2 components, F(1) - the catalytic core - and F(0) - the membrane proton channel. F(1) has five subunits: alpha(3), beta(3), gamma(1), delta(1), epsilon(1). F(0) has three main subunits: a(1), b(2) and c(10-14). The alpha and beta chains form an alternating ring which encloses part of the gamma chain. F(1) is attached to F(0) by a central stalk formed by the gamma and epsilon chains, while a peripheral stalk is formed by the delta and b chains.

Its subcellular location is the cell inner membrane. F(1)F(0) ATP synthase produces ATP from ADP in the presence of a proton or sodium gradient. F-type ATPases consist of two structural domains, F(1) containing the extramembraneous catalytic core and F(0) containing the membrane proton channel, linked together by a central stalk and a peripheral stalk. During catalysis, ATP synthesis in the catalytic domain of F(1) is coupled via a rotary mechanism of the central stalk subunits to proton translocation. Functionally, component of the F(0) channel, it forms part of the peripheral stalk, linking F(1) to F(0). This chain is ATP synthase subunit b 1, found in Marinomonas sp. (strain MWYL1).